The sequence spans 146 residues: Lipoprotein signal peptidase (146 aa).

Transmembrane regions (helical) follow at residues 10–30 (GLFV…LGGF), 54–74 (FLEG…LLFL), and 80–100 (FFVA…SNIL). Residues D110 and D127 contribute to the active site. A helical transmembrane segment spans residues 118–138 (FEFAIFNFADVMIDVAVALFL).

This sequence belongs to the peptidase A8 family.

It is found in the cell inner membrane. It catalyses the reaction Release of signal peptides from bacterial membrane prolipoproteins. Hydrolyzes -Xaa-Yaa-Zaa-|-(S,diacylglyceryl)Cys-, in which Xaa is hydrophobic (preferably Leu), and Yaa (Ala or Ser) and Zaa (Gly or Ala) have small, neutral side chains.. The protein operates within protein modification; lipoprotein biosynthesis (signal peptide cleavage). Functionally, this protein specifically catalyzes the removal of signal peptides from prolipoproteins. In Wolinella succinogenes (strain ATCC 29543 / DSM 1740 / CCUG 13145 / JCM 31913 / LMG 7466 / NCTC 11488 / FDC 602W) (Vibrio succinogenes), this protein is Lipoprotein signal peptidase.